The sequence spans 480 residues: UDP-N-acetylmuramoylalanine--D-glutamate ligase (480 aa).

127–133 (GTNGKTT) is an ATP binding site.

Belongs to the MurCDEF family.

The protein localises to the cytoplasm. It catalyses the reaction UDP-N-acetyl-alpha-D-muramoyl-L-alanine + D-glutamate + ATP = UDP-N-acetyl-alpha-D-muramoyl-L-alanyl-D-glutamate + ADP + phosphate + H(+). It functions in the pathway cell wall biogenesis; peptidoglycan biosynthesis. Cell wall formation. Catalyzes the addition of glutamate to the nucleotide precursor UDP-N-acetylmuramoyl-L-alanine (UMA). This Tropheryma whipplei (strain TW08/27) (Whipple's bacillus) protein is UDP-N-acetylmuramoylalanine--D-glutamate ligase.